A 164-amino-acid polypeptide reads, in one-letter code: UPF0262 protein Nham_0287 (164 aa).

It belongs to the UPF0262 family.

This chain is UPF0262 protein Nham_0287, found in Nitrobacter hamburgensis (strain DSM 10229 / NCIMB 13809 / X14).